The following is a 201-amino-acid chain: Small ribosomal subunit protein uS4c (201 aa).

The segment at 16-37 (GALPGLTSKRPRSGSDLRNQSR) is disordered. An S4 RNA-binding domain is found at 89–152 (MRLDNTLFRL…RSRTLIQNHI (64 aa)).

It belongs to the universal ribosomal protein uS4 family. In terms of assembly, part of the 30S ribosomal subunit. Contacts protein S5. The interaction surface between S4 and S5 is involved in control of translational fidelity.

The protein resides in the plastid. The protein localises to the chloroplast. Its function is as follows. One of the primary rRNA binding proteins, it binds directly to 16S rRNA where it nucleates assembly of the body of the 30S subunit. Functionally, with S5 and S12 plays an important role in translational accuracy. The sequence is that of Small ribosomal subunit protein uS4c (rps4) from Chloranthus spicatus (Chulantree).